Here is a 195-residue protein sequence, read N- to C-terminus: Dephospho-CoA kinase (195 aa).

Positions 4–195 (IIGLTGGIAS…EQILDALQRL (192 aa)) constitute a DPCK domain. 12–17 (ASGKST) contacts ATP.

The protein belongs to the CoaE family.

The protein localises to the cytoplasm. It carries out the reaction 3'-dephospho-CoA + ATP = ADP + CoA + H(+). Its pathway is cofactor biosynthesis; coenzyme A biosynthesis; CoA from (R)-pantothenate: step 5/5. In terms of biological role, catalyzes the phosphorylation of the 3'-hydroxyl group of dephosphocoenzyme A to form coenzyme A. The chain is Dephospho-CoA kinase from Streptococcus agalactiae serotype Ia (strain ATCC 27591 / A909 / CDC SS700).